A 1171-amino-acid polypeptide reads, in one-letter code: APC-related protein 1 (1171 aa).

Positions 1–54 (MSSSSSDENETTIHSSSNPGSSGIYSQLKAGSSKRPSVRHDVSDAEDDEEPYEG) are disordered. The tract at residues 1–481 (MSSSSSDENE…LSLRATRASP (481 aa)) is required for interaction with bar-1 and hmp-2. The segment covering 15–26 (SSSNPGSSGIYS) has biased composition (low complexity). Residues 312 to 356 (NCLKVLANILSPDARFTTLVDSASGILKYVSQYLATNSSHLELRS) form an ARM repeat. Disordered stretches follow at residues 587–617 (PVDD…NPGS), 662–699 (HPED…GTTV), 720–741 (RKTS…LEVE), 767–822 (EEMP…EMTT), 837–936 (PRSR…TMRI), and 995–1030 (SSGS…SSLP). A required for interaction with pry-1 region spans residues 591–1171 (DLDIPTSTVM…NPKQMLVTIV (581 aa)). Composition is skewed to polar residues over residues 595 to 617 (PTST…NPGS) and 666 to 697 (NQMT…SDGT). Residues 788–799 (FSPSQKTTSSPA) show a composition bias toward polar residues. Positions 857–874 (EPDRSSHSKNEEADRRDA) are enriched in basic and acidic residues. 2 stretches are compositionally biased toward polar residues: residues 890–913 (RGSS…SSED) and 1002–1028 (LQKA…SVSS).

It belongs to the adenomatous polyposis coli (APC) family. As to quaternary structure, interacts (via N-terminus) with bar-1 and hmp-2; the interaction with hmp-2 is relatively weak. Interacts (via C-terminus) with pry-1 (via N-terminus). Probably associates with bar-1, gsk-3, pry-1 in a complex.

Its subcellular location is the cell junction. It is found in the adherens junction. It localises to the cytoplasm. The protein localises to the nucleus. In terms of biological role, has a role in endoderm cell specification and pharyngeal development. Required for the migration of epithelial cells, organization of the anterior seam cells and ceh-13 expression during embryo morphogenesis. Prevents hyperactivation of the Wnt signaling pathway during endoderm development, probably by preventing hmp-2 nuclear translocation. During larval development, apr-1 is required for expression of lin-39 in P3-8.p. Shown to negatively regulate Wnt signaling in vulval precursor cells. Has a role in cell division by establishing the polarity of the mother cell which forms the asymmetries of the daughter nuclei. Thought to regulate export of wrm-1 from the nucleus possibly as part of a complex involving pry-1. This chain is APC-related protein 1, found in Caenorhabditis briggsae.